Here is a 469-residue protein sequence, read N- to C-terminus: Proline--tRNA ligase (469 aa).

It belongs to the class-II aminoacyl-tRNA synthetase family. ProS type 3 subfamily. Homodimer.

The protein localises to the cytoplasm. The catalysed reaction is tRNA(Pro) + L-proline + ATP = L-prolyl-tRNA(Pro) + AMP + diphosphate. Its function is as follows. Catalyzes the attachment of proline to tRNA(Pro) in a two-step reaction: proline is first activated by ATP to form Pro-AMP and then transferred to the acceptor end of tRNA(Pro). The polypeptide is Proline--tRNA ligase (Methanosphaera stadtmanae (strain ATCC 43021 / DSM 3091 / JCM 11832 / MCB-3)).